Here is a 397-residue protein sequence, read N- to C-terminus: Serine/threonine-protein kinase 17A (397 aa).

A disordered region spans residues 1 to 23 (MIPLEKPGSGGSPSAAASGSGPG). At Ser-9 the chain carries Phosphoserine. A Protein kinase domain is found at 44-304 (LSPGRELGRG…AEECLKHPWL (261 aa)). ATP is bound by residues 50 to 58 (LGRGKFAVV) and Lys-73. Residue Asp-169 is the Proton acceptor of the active site.

It belongs to the protein kinase superfamily. CAMK Ser/Thr protein kinase family. DAP kinase subfamily. Autophosphorylated. As to expression, highly expressed in bone marrow. Lower levels in brain, heart, lung, liver and kidney.

The protein localises to the nucleus. It catalyses the reaction L-seryl-[protein] + ATP = O-phospho-L-seryl-[protein] + ADP + H(+). It carries out the reaction L-threonyl-[protein] + ATP = O-phospho-L-threonyl-[protein] + ADP + H(+). Its activity is regulated as follows. Inhibited by thiazolidinedione-type compounds: inhibited by furan- and pyridone- thiazolidinediones. Acts as a positive regulator of apoptosis. May also act as a regulator of cellular reactive oxygen species. In Oryctolagus cuniculus (Rabbit), this protein is Serine/threonine-protein kinase 17A (STK17A).